A 393-amino-acid polypeptide reads, in one-letter code: Putative odorant receptor 69a, isoform B (393 aa).

Topologically, residues 1–39 are cytoplasmic; it reads MQLEDFMRYPDLVCQAAQLPRYTWNGRRSLEVKRNLAKR. The helical transmembrane segment at 40–60 threads the bilayer; it reads IIFWLGAVNLVYHNIGCVMYG. Over 61 to 69 the chain is Extracellular; that stretch reads YFGDGRTKD. Residues 70 to 90 traverse the membrane as a helical segment; it reads PIAYLAELASVASMLGFTIVG. At 91-138 the chain is on the cytoplasmic side; that stretch reads TLNLWKMLSLKTHFENLLNEFEELFQLIKHRAYRIHHYQEKYTRHIRN. A helical transmembrane segment spans residues 139-159; that stretch reads TFIFHTSAVVYYNSLPILLMI. Over 160-208 the chain is Extracellular; the sequence is REHFSNSQQLGYRIQSNTWYPWQVQGSIPGFFAAVACQIFSCQTNMCVN. A helical membrane pass occupies residues 209–229; sequence MFIQFLINFFGIQLEIHFDGL. Topologically, residues 230–269 are cytoplasmic; that stretch reads ARQLETIDARNPHAKDQLKYLIVYHTKLLNLADRVNRSFN. A helical membrane pass occupies residues 270-290; that stretch reads FTFLISLSVSMISNCFLAFSM. Residues 291-305 are Extracellular-facing; sequence TMFDFGTSLKHLLGL. The chain crosses the membrane as a helical span at residues 306 to 326; sequence LLFITYNFSMCRSGTHLILTS. Over 327-365 the chain is Cytoplasmic; sequence GKVLPAAFYNNWYEGDLVYRRMLLILMMRATKPYMWKTY. The chain crosses the membrane as a helical span at residues 366 to 386; it reads KLAPVSITTYMATLKFSYQMF. The Extracellular portion of the chain corresponds to 387–393; sequence TCVRSLK.

It belongs to the insect chemoreceptor superfamily. Heteromeric odorant receptor channel (TC 1.A.69) family. Or49a subfamily. As to quaternary structure, interacts with Orco. Complexes exist early in the endomembrane system in olfactory sensory neurons (OSNs), coupling these complexes to the conserved ciliary trafficking pathway. In terms of tissue distribution, expressed in olfactory sensory neurons in the antenna.

It is found in the cell membrane. Odorant receptor which mediates acceptance or avoidance behavior, depending on its substrates. The odorant receptor repertoire encodes a large collection of odor stimuli that vary widely in identity, intensity, and duration. May form a complex with Orco to form odorant-sensing units, providing sensitive and prolonged odorant signaling and calcium permeability. The protein is Putative odorant receptor 69a, isoform B (Or69a) of Drosophila melanogaster (Fruit fly).